A 210-amino-acid polypeptide reads, in one-letter code: Prolactin (210 aa).

Residues 1–23 form the signal peptide; it reads MAEGSRLYFAVTVLMCAFVSING. 2 disulfides stabilise this stretch: Cys-69–Cys-183 and Cys-200–Cys-210.

It belongs to the somatotropin/prolactin family. As to expression, pituitary gland.

Its subcellular location is the secreted. The chain is Prolactin (prl) from Hypophthalmichthys nobilis (Bighead carp).